A 345-amino-acid polypeptide reads, in one-letter code: N-acetyl-gamma-glutamyl-phosphate reductase (345 aa).

Cys-149 is an active-site residue.

The protein belongs to the NAGSA dehydrogenase family. Type 1 subfamily.

The protein resides in the cytoplasm. It catalyses the reaction N-acetyl-L-glutamate 5-semialdehyde + phosphate + NADP(+) = N-acetyl-L-glutamyl 5-phosphate + NADPH + H(+). Its pathway is amino-acid biosynthesis; L-arginine biosynthesis; N(2)-acetyl-L-ornithine from L-glutamate: step 3/4. In terms of biological role, catalyzes the NADPH-dependent reduction of N-acetyl-5-glutamyl phosphate to yield N-acetyl-L-glutamate 5-semialdehyde. The chain is N-acetyl-gamma-glutamyl-phosphate reductase from Bacillus anthracis.